The sequence spans 338 residues: Glycerol-3-phosphate dehydrogenase [NAD(P)+] (338 aa).

The NADPH site is built by Ser13, Trp14, and Lys108. Sn-glycerol 3-phosphate contacts are provided by Lys108, Gly139, and Ser141. Position 143 (Ala143) interacts with NADPH. Residues Lys194, Asp247, Ser257, Arg258, and Asn259 each coordinate sn-glycerol 3-phosphate. Lys194 acts as the Proton acceptor in catalysis. Residue Arg258 participates in NADPH binding. NADPH is bound by residues Val282 and Glu284.

Belongs to the NAD-dependent glycerol-3-phosphate dehydrogenase family.

It is found in the cytoplasm. It carries out the reaction sn-glycerol 3-phosphate + NAD(+) = dihydroxyacetone phosphate + NADH + H(+). The enzyme catalyses sn-glycerol 3-phosphate + NADP(+) = dihydroxyacetone phosphate + NADPH + H(+). It functions in the pathway membrane lipid metabolism; glycerophospholipid metabolism. Catalyzes the reduction of the glycolytic intermediate dihydroxyacetone phosphate (DHAP) to sn-glycerol 3-phosphate (G3P), the key precursor for phospholipid synthesis. The polypeptide is Glycerol-3-phosphate dehydrogenase [NAD(P)+] (Listeria innocua serovar 6a (strain ATCC BAA-680 / CLIP 11262)).